The primary structure comprises 516 residues: MTDIHNHKILILDFGSQYTQLIARRVRELGVFCEIFPHDVAADFIKNYQAKGIILSGGPESVYDSDVKAPEIVFELGVPVLGICYGMQTMVMQHGGEVKGADQSEFGKAIINILNSTNNIFSNMEHEQLVWMSHSDKVTQTGEHFEIIASSTNAPVAAVAHKNKPFFGVQFHPETTHTENGKQIIENFVVNICGCDTLWNIENIIENDIKEIKQKVGTDKVILGLSGGVDSSVVAAILHQAIGDQLTCIFVDTGLLRLNEGDQVMQVFAEHMDINVIRINAKNRFLDALRGICDPEQKRKIIGKLFVDIFDEEAAKIENAKWLAQGTIYSDVIESAGNNQSKAHVIKSHHNVGGLPKEMKLKLLEPLRELFKDEVRKLGLGLGLPYNMLYRHPFPGPGLGVRILGEIKKEYVETLQKADAIFTEELYKHNLYHDVSQAFGVFLPVKSVGVVGDQRRYEYVIALRAVVSIDFMTATWANLPYDFLSLVSNRIVNEVKQVSRVVYDVTGKPPGTIEWE.

The Glutamine amidotransferase type-1 domain occupies 8–198 (KILILDFGSQ…VVNICGCDTL (191 aa)). The active-site Nucleophile is Cys84. Active-site residues include His172 and Glu174. One can recognise a GMPS ATP-PPase domain in the interval 199–391 (WNIENIIEND…LGLPYNMLYR (193 aa)). 226 to 232 (SGGVDSS) lines the ATP pocket.

As to quaternary structure, homodimer.

The catalysed reaction is XMP + L-glutamine + ATP + H2O = GMP + L-glutamate + AMP + diphosphate + 2 H(+). Its pathway is purine metabolism; GMP biosynthesis; GMP from XMP (L-Gln route): step 1/1. In terms of biological role, catalyzes the synthesis of GMP from XMP. In Francisella tularensis subsp. tularensis (strain WY96-3418), this protein is GMP synthase [glutamine-hydrolyzing].